A 407-amino-acid polypeptide reads, in one-letter code: Ornithine cyclodeaminase (407 aa).

NAD(+)-binding residues include Asn-233, Ala-234, Asp-312, Thr-344, Met-345, Leu-346, His-347, Asp-365, Asp-388, and Val-389.

The protein belongs to the AgrE/ArgZ ornithine cyclodeaminase family. The cofactor is NAD(+).

It catalyses the reaction L-ornithine = L-proline + NH4(+). In terms of biological role, catalyzes the conversion of ornithine to proline, with the release of ammonia. This Archaeoglobus fulgidus (strain ATCC 49558 / DSM 4304 / JCM 9628 / NBRC 100126 / VC-16) protein is Ornithine cyclodeaminase.